We begin with the raw amino-acid sequence, 180 residues long: Shikimate kinase (180 aa).

15–20 is a binding site for ATP; it reads GAGKTT. Position 19 (Thr-19) interacts with Mg(2+). 3 residues coordinate substrate: Asp-37, Arg-61, and Gly-83. Position 121 (Arg-121) interacts with ATP. Arg-140 is a binding site for substrate.

Belongs to the shikimate kinase family. In terms of assembly, monomer. It depends on Mg(2+) as a cofactor.

It is found in the cytoplasm. It carries out the reaction shikimate + ATP = 3-phosphoshikimate + ADP + H(+). Its pathway is metabolic intermediate biosynthesis; chorismate biosynthesis; chorismate from D-erythrose 4-phosphate and phosphoenolpyruvate: step 5/7. Functionally, catalyzes the specific phosphorylation of the 3-hydroxyl group of shikimic acid using ATP as a cosubstrate. This is Shikimate kinase from Psychrobacter sp. (strain PRwf-1).